The sequence spans 232 residues: Phosphate-specific transport system accessory protein PhoU homolog 1 (232 aa).

The protein belongs to the PhoU family. In terms of assembly, homodimer.

The protein localises to the cytoplasm. In terms of biological role, plays a role in the regulation of phosphate uptake. The chain is Phosphate-specific transport system accessory protein PhoU homolog 1 (phoU1) from Thermotoga maritima (strain ATCC 43589 / DSM 3109 / JCM 10099 / NBRC 100826 / MSB8).